Reading from the N-terminus, the 39-residue chain is Cytochrome b559 subunit beta (39 aa).

A helical transmembrane segment spans residues 14–30 (WLAVHGLAIPTVSFLGS). His18 contacts heme.

This sequence belongs to the PsbE/PsbF family. In terms of assembly, heterodimer of an alpha subunit and a beta subunit. PSII is composed of 1 copy each of membrane proteins PsbA, PsbB, PsbC, PsbD, PsbE, PsbF, PsbH, PsbI, PsbJ, PsbK, PsbL, PsbM, PsbT, PsbX, PsbY, PsbZ, Psb30/Ycf12, at least 3 peripheral proteins of the oxygen-evolving complex and a large number of cofactors. It forms dimeric complexes. The cofactor is heme b.

The protein resides in the plastid. The protein localises to the chloroplast thylakoid membrane. Functionally, this b-type cytochrome is tightly associated with the reaction center of photosystem II (PSII). PSII is a light-driven water:plastoquinone oxidoreductase that uses light energy to abstract electrons from H(2)O, generating O(2) and a proton gradient subsequently used for ATP formation. It consists of a core antenna complex that captures photons, and an electron transfer chain that converts photonic excitation into a charge separation. This is Cytochrome b559 subunit beta from Beta vulgaris (Sugar beet).